Reading from the N-terminus, the 125-residue chain is Small ribosomal subunit protein uS12 (125 aa).

At aspartate 89 the chain carries 3-methylthioaspartic acid.

It belongs to the universal ribosomal protein uS12 family. In terms of assembly, part of the 30S ribosomal subunit. Contacts proteins S8 and S17. May interact with IF1 in the 30S initiation complex.

With S4 and S5 plays an important role in translational accuracy. Functionally, interacts with and stabilizes bases of the 16S rRNA that are involved in tRNA selection in the A site and with the mRNA backbone. Located at the interface of the 30S and 50S subunits, it traverses the body of the 30S subunit contacting proteins on the other side and probably holding the rRNA structure together. The combined cluster of proteins S8, S12 and S17 appears to hold together the shoulder and platform of the 30S subunit. In Clostridium botulinum (strain Alaska E43 / Type E3), this protein is Small ribosomal subunit protein uS12.